The chain runs to 540 residues: Peptide chain release factor 3 (540 aa).

In terms of domain architecture, tr-type G spans 14-283 (NQRRNFAIIS…AFLDYALKPI (270 aa)). GTP is bound by residues 23–30 (SHPDAGKT), 91–95 (DTPGH), and 145–148 (NKLD).

It belongs to the TRAFAC class translation factor GTPase superfamily. Classic translation factor GTPase family. PrfC subfamily.

The protein resides in the cytoplasm. Its function is as follows. Increases the formation of ribosomal termination complexes and stimulates activities of RF-1 and RF-2. It binds guanine nucleotides and has strong preference for UGA stop codons. It may interact directly with the ribosome. The stimulation of RF-1 and RF-2 is significantly reduced by GTP and GDP, but not by GMP. The polypeptide is Peptide chain release factor 3 (Gloeothece citriformis (strain PCC 7424) (Cyanothece sp. (strain PCC 7424))).